The following is a 184-amino-acid chain: ATP synthase subunit b 1 (184 aa).

The helical transmembrane segment at 4-24 threads the bilayer; sequence LSILAVLAASPAMAATGPFLS.

Belongs to the ATPase B chain family. In terms of assembly, F-type ATPases have 2 components, F(1) - the catalytic core - and F(0) - the membrane proton channel. F(1) has five subunits: alpha(3), beta(3), gamma(1), delta(1), epsilon(1). F(0) has three main subunits: a(1), b(2) and c(10-14). The alpha and beta chains form an alternating ring which encloses part of the gamma chain. F(1) is attached to F(0) by a central stalk formed by the gamma and epsilon chains, while a peripheral stalk is formed by the delta and b chains.

The protein localises to the cell inner membrane. Its function is as follows. F(1)F(0) ATP synthase produces ATP from ADP in the presence of a proton or sodium gradient. F-type ATPases consist of two structural domains, F(1) containing the extramembraneous catalytic core and F(0) containing the membrane proton channel, linked together by a central stalk and a peripheral stalk. During catalysis, ATP synthesis in the catalytic domain of F(1) is coupled via a rotary mechanism of the central stalk subunits to proton translocation. Functionally, component of the F(0) channel, it forms part of the peripheral stalk, linking F(1) to F(0). In Cereibacter sphaeroides (strain ATCC 17029 / ATH 2.4.9) (Rhodobacter sphaeroides), this protein is ATP synthase subunit b 1.